We begin with the raw amino-acid sequence, 1260 residues long: uncharacterized protein (1260 aa).

It belongs to the oxoprolinase family.

This is an uncharacterized protein from Schizosaccharomyces pombe (strain 972 / ATCC 24843) (Fission yeast).